We begin with the raw amino-acid sequence, 478 residues long: Cysteine protease ATG4B (478 aa).

A compositionally biased stretch (polar residues) spans 1–15; the sequence is MTSLPDRGVSSSSSD. A disordered region spans residues 1-20; sequence MTSLPDRGVSSSSSDPLCEG. The Nucleophile role is filled by Cys-164. Residues Asp-361 and His-363 contribute to the active site.

The protein belongs to the peptidase C54 family. Interacts with ATG8. As to expression, constitutively expressed.

It localises to the cytoplasm. The enzyme catalyses [protein]-C-terminal L-amino acid-glycyl-phosphatidylethanolamide + H2O = [protein]-C-terminal L-amino acid-glycine + a 1,2-diacyl-sn-glycero-3-phosphoethanolamine. Functionally, cysteine protease that plays a key role in autophagy by mediating both proteolytic activation and delipidation of ATG8 family proteins. The protease activity is required for proteolytic activation of ATG8 family proteins: cleaves the C-terminal amino acid of ATG8 proteins to reveal a C-terminal glycine. Exposure of the glycine at the C-terminus is essential for ATG8 proteins conjugation to phosphatidylethanolamine (PE) and insertion to membranes, which is necessary for autophagy. In addition to the protease activity, also mediates delipidation of PE-conjugated ATG8 proteins. In Oryza sativa subsp. indica (Rice), this protein is Cysteine protease ATG4B (ATG4B).